The primary structure comprises 214 residues: Neurogenin-3 (214 aa).

The span at 1-14 shows a compositional bias: polar residues; it reads MTPQPSGAPTVQVT. The disordered stretch occupies residues 1-98; sequence MTPQPSGAPT…NDRERNRMHN (98 aa). Residues 15–26 show a composition bias toward basic and acidic residues; sequence RETERSFPRASE. Basic residues-rich tracts occupy residues 57-70 and 79-88; these read APRK…GRSR and KQRRSRRKKA. Residues 83–135 enclose the bHLH domain; that stretch reads SRRKKANDRERNRMHNLNSALDALRGVLPTFPDDAKLTKIETLRFAHNYIWAL.

As to quaternary structure, efficient DNA binding requires dimerization with another bHLH protein. Interacts with ATOH8.

It localises to the nucleus. Functionally, acts as a transcriptional regulator. Together with NKX2-2, initiates transcriptional activation of NEUROD1. Involved in neurogenesis. Also required for the specification of a common precursor of the 4 pancreatic endocrine cell types. This chain is Neurogenin-3 (NEUROG3), found in Homo sapiens (Human).